We begin with the raw amino-acid sequence, 153 residues long: MSLDLALDIQHATTCDWLPTDEQFALWVTTAIGNSMNEAELTIRIVDSRESQMLNSTYRGKDKPTNVLSFPFEAPPEIELPLLGDLVICAAVVENEAREQQKTLEAHWAHMVVHGCLHLLGYDHIEDEEAEEMESLETQLIEGLGFTDPYKEQ.

Zn(2+) contacts are provided by His-114, His-118, and His-124.

It belongs to the endoribonuclease YbeY family. The cofactor is Zn(2+).

It is found in the cytoplasm. Functionally, single strand-specific metallo-endoribonuclease involved in late-stage 70S ribosome quality control and in maturation of the 3' terminus of the 16S rRNA. This Shewanella baltica (strain OS185) protein is Endoribonuclease YbeY.